The following is a 249-amino-acid chain: Hydroxyacylglutathione hydrolase (249 aa).

The Zn(2+) site is built by H54, H56, D58, H59, H113, D138, and H176.

The protein belongs to the metallo-beta-lactamase superfamily. Glyoxalase II family. In terms of assembly, monomer. Zn(2+) is required as a cofactor.

The catalysed reaction is an S-(2-hydroxyacyl)glutathione + H2O = a 2-hydroxy carboxylate + glutathione + H(+). It participates in secondary metabolite metabolism; methylglyoxal degradation; (R)-lactate from methylglyoxal: step 2/2. Thiolesterase that catalyzes the hydrolysis of S-D-lactoyl-glutathione to form glutathione and D-lactic acid. This is Hydroxyacylglutathione hydrolase from Parasynechococcus marenigrum (strain WH8102).